A 366-amino-acid chain; its full sequence is MAQRVQEEDEQMMSTDDLIQAQIKLYHHCFAFIKSTALWAAIDLRIADVIHRNGGAATLSDLALNVGLHPTKLSHLRRLMRVLTVTGIFAVEDRNGEAMYTLTRVSRLLLNSDGEGTHALSQMARVLANPLAVISHFSIHEWFTTEKATTMTPFEVAHGCTRWEMIANDAKDGSVFNAGMVEDSRVAMDIILKESCGIFQGISSLIDVGGGHGAAAAAIATAFPNIKCTVLDLPHIVAEAPATHSNIQFIGGDLFKFIPAADVVLLKCLLHCWQDDDCVKILRLCKEAIPARDAGGKVIIIEVVVGIGSEEIVPKEMQLLFDVFMMYIDGIEREEYEWKKIFLEAGFSDYKITPVLGARSIIEVYP.

Positions 209, 232, 253, and 267 each coordinate S-adenosyl-L-homocysteine. H271 (proton acceptor) is an active-site residue. Active-site residues include E302 and E332.

The protein belongs to the class I-like SAM-binding methyltransferase superfamily. Cation-independent O-methyltransferase family. As to quaternary structure, homodimer. In terms of tissue distribution, expressed in roots, leaves, stems and flowers.

Its subcellular location is the cytoplasm. The enzyme catalyses N-acetylserotonin + S-adenosyl-L-methionine = melatonin + S-adenosyl-L-homocysteine + H(+). It participates in aromatic compound metabolism; melatonin biosynthesis; melatonin from serotonin: step 1/2. Its function is as follows. Methyltransferase which catalyzes the transfer of a methyl group onto N-acetylserotonin, producing melatonin (N-acetyl-5-methoxytryptamine). The chain is Acetylserotonin O-methyltransferase 2 from Oryza sativa subsp. japonica (Rice).